A 542-amino-acid polypeptide reads, in one-letter code: CTP synthase (542 aa).

Residues 1-265 (MTRFIFITGG…DTQVLKFFGM (265 aa)) are amidoligase domain. Serine 13 provides a ligand contact to CTP. Serine 13 provides a ligand contact to UTP. 14–19 (SLGKGL) serves as a coordination point for ATP. Position 54 (tyrosine 54) interacts with L-glutamine. Aspartate 71 contacts ATP. Residues aspartate 71 and glutamate 139 each coordinate Mg(2+). CTP contacts are provided by residues 146-148 (DIE), 186-191 (KTKPTQ), and lysine 222. Residues 186-191 (KTKPTQ) and lysine 222 each bind UTP. Positions 291 to 541 (TIAVVGKYTS…IRAAIEQSRL (251 aa)) constitute a Glutamine amidotransferase type-1 domain. Glycine 353 serves as a coordination point for L-glutamine. The active-site Nucleophile; for glutamine hydrolysis is cysteine 380. L-glutamine contacts are provided by residues 381–384 (FGMQ), glutamate 404, and arginine 469. Active-site residues include histidine 514 and glutamate 516.

The protein belongs to the CTP synthase family. Homotetramer.

It carries out the reaction UTP + L-glutamine + ATP + H2O = CTP + L-glutamate + ADP + phosphate + 2 H(+). The catalysed reaction is L-glutamine + H2O = L-glutamate + NH4(+). It catalyses the reaction UTP + NH4(+) + ATP = CTP + ADP + phosphate + 2 H(+). Its pathway is pyrimidine metabolism; CTP biosynthesis via de novo pathway; CTP from UDP: step 2/2. Its activity is regulated as follows. Allosterically activated by GTP, when glutamine is the substrate; GTP has no effect on the reaction when ammonia is the substrate. The allosteric effector GTP functions by stabilizing the protein conformation that binds the tetrahedral intermediate(s) formed during glutamine hydrolysis. Inhibited by the product CTP, via allosteric rather than competitive inhibition. Functionally, catalyzes the ATP-dependent amination of UTP to CTP with either L-glutamine or ammonia as the source of nitrogen. Regulates intracellular CTP levels through interactions with the four ribonucleotide triphosphates. This Rhodospirillum centenum (strain ATCC 51521 / SW) protein is CTP synthase.